A 286-amino-acid polypeptide reads, in one-letter code: 3-hydroxyanthranilate 3,4-dioxygenase (286 aa).

Positions methionine 1–isoleucine 160 are domain A (catalytic). Arginine 43 is a binding site for O2. Fe cation contacts are provided by histidine 47, glutamate 53, and histidine 91. Residue glutamate 53 coordinates substrate. Residues arginine 95 and glutamate 105 each coordinate substrate. Residues proline 161–isoleucine 177 form a linker region. The interval methionine 178 to glycine 286 is domain B.

This sequence belongs to the 3-HAO family. In terms of assembly, monomer. Requires Fe(2+) as cofactor.

It is found in the cytoplasm. Its subcellular location is the cytosol. It carries out the reaction 3-hydroxyanthranilate + O2 = (2Z,4Z)-2-amino-3-carboxymuconate 6-semialdehyde. The protein operates within cofactor biosynthesis; NAD(+) biosynthesis; quinolinate from L-kynurenine: step 3/3. Functionally, catalyzes the oxidative ring opening of 3-hydroxyanthranilate to 2-amino-3-carboxymuconate semialdehyde, which spontaneously cyclizes to quinolinate. The protein is 3-hydroxyanthranilate 3,4-dioxygenase of Homo sapiens (Human).